A 455-amino-acid polypeptide reads, in one-letter code: Glutamyl-tRNA(Gln) amidotransferase subunit A (455 aa).

Catalysis depends on charge relay system residues K74 and S149. The Acyl-ester intermediate role is filled by S173.

It belongs to the amidase family. GatA subfamily. As to quaternary structure, heterotrimer of A, B and C subunits.

The catalysed reaction is L-glutamyl-tRNA(Gln) + L-glutamine + ATP + H2O = L-glutaminyl-tRNA(Gln) + L-glutamate + ADP + phosphate + H(+). Functionally, allows the formation of correctly charged Gln-tRNA(Gln) through the transamidation of misacylated Glu-tRNA(Gln) in organisms which lack glutaminyl-tRNA synthetase. The reaction takes place in the presence of glutamine and ATP through an activated gamma-phospho-Glu-tRNA(Gln). This is Glutamyl-tRNA(Gln) amidotransferase subunit A from Methanosphaera stadtmanae (strain ATCC 43021 / DSM 3091 / JCM 11832 / MCB-3).